Reading from the N-terminus, the 57-residue chain is UPF0391 membrane protein bsl5717 (57 aa).

The next 2 membrane-spanning stretches (helical) occupy residues 6–26 (WALIFLLVSIVAGVLGFTGIS) and 35–55 (FLFYVFVVIFLVLLILGLTIF).

This sequence belongs to the UPF0391 family.

It localises to the cell membrane. The chain is UPF0391 membrane protein bsl5717 from Bradyrhizobium diazoefficiens (strain JCM 10833 / BCRC 13528 / IAM 13628 / NBRC 14792 / USDA 110).